Consider the following 387-residue polypeptide: 3-ketoacyl-CoA thiolase (387 aa).

Cys91 (acyl-thioester intermediate) is an active-site residue. Residues His343 and Cys373 each act as proton acceptor in the active site.

Belongs to the thiolase-like superfamily. Thiolase family. Heterotetramer of two alpha chains (FadB) and two beta chains (FadA).

The protein localises to the cytoplasm. It catalyses the reaction an acyl-CoA + acetyl-CoA = a 3-oxoacyl-CoA + CoA. Its pathway is lipid metabolism; fatty acid beta-oxidation. Catalyzes the final step of fatty acid oxidation in which acetyl-CoA is released and the CoA ester of a fatty acid two carbons shorter is formed. The protein is 3-ketoacyl-CoA thiolase of Cronobacter sakazakii (strain ATCC BAA-894) (Enterobacter sakazakii).